The chain runs to 476 residues: Ribosomal RNA small subunit methyltransferase F (476 aa).

Residues 124-130 (ASAPGSK), glutamate 148, aspartate 175, and aspartate 193 contribute to the S-adenosyl-L-methionine site. Residue cysteine 246 is the Nucleophile of the active site.

Belongs to the class I-like SAM-binding methyltransferase superfamily. RsmB/NOP family.

The protein localises to the cytoplasm. The enzyme catalyses cytidine(1407) in 16S rRNA + S-adenosyl-L-methionine = 5-methylcytidine(1407) in 16S rRNA + S-adenosyl-L-homocysteine + H(+). In terms of biological role, specifically methylates the cytosine at position 1407 (m5C1407) of 16S rRNA. The protein is Ribosomal RNA small subunit methyltransferase F of Photobacterium profundum (strain SS9).